Consider the following 398-residue polypeptide: Arylacetamide deacetylase (398 aa).

The Cytoplasmic segment spans residues 1-5; sequence MGKTI. Residues 6 to 26 traverse the membrane as a helical; Signal-anchor for type II membrane protein segment; the sequence is SLLISVVLVAYYLYIPLPDAI. The Lumenal segment spans residues 27-398; it reads EEPWKVVWET…QYLSWLIKNL (372 aa). An Involved in the stabilization of the negatively charged intermediate by the formation of the oxyanion hole motif is present at residues 110 to 112; it reads HGG. Cys115 and Cys339 form a disulfide bridge. The active site involves Ser188. The N-linked (GlcNAc...) asparagine glycan is linked to Asn281. Catalysis depends on residues Asp342 and His372.

It belongs to the 'GDXG' lipolytic enzyme family. N-glycosylated. In terms of tissue distribution, highest levels in liver with lower levels in jejunum and kidney.

Its subcellular location is the endoplasmic reticulum membrane. The protein resides in the microsome membrane. The catalysed reaction is a triacylglycerol + H2O = a diacylglycerol + a fatty acid + H(+). Its function is as follows. Displays cellular triglyceride lipase activity in liver, increases the levels of intracellular fatty acids derived from the hydrolysis of newly formed triglyceride stores and plays a role in very low-density lipoprotein assembly. Displays serine esterase activity in liver. Deacetylates a variety of arylacetamide substrates, including xenobiotic compounds and procarcinogens, converting them to the primary arylamide compounds and increasing their toxicity. The sequence is that of Arylacetamide deacetylase (Aadac) from Mus musculus (Mouse).